We begin with the raw amino-acid sequence, 260 residues long: Carbonic anhydrase 2 (260 aa).

Position 2 is an N-acetylserine (Ser-2). Ser-2 carries the phosphoserine modification. The Alpha-carbonic anhydrase domain occupies His-3–Pro-259. Residue His-64 is the Proton donor/acceptor of the active site. Positions 94, 96, and 119 each coordinate Zn(2+). Phosphoserine occurs at positions 165 and 172. Thr-198–Asn-199 contacts substrate.

It belongs to the alpha-carbonic anhydrase family. Interacts with SLC4A4 and SLC26A6. Interaction with SLC4A7 regulates SLC4A7 transporter activity. Zn(2+) serves as cofactor.

It is found in the cytoplasm. The protein localises to the cell membrane. The catalysed reaction is hydrogencarbonate + H(+) = CO2 + H2O. It catalyses the reaction urea = cyanamide + H2O. With respect to regulation, inhibited by acetazolamide. Its function is as follows. Catalyzes the reversible hydration of carbon dioxide. Can also hydrate cyanamide to urea. Involved in the regulation of fluid secretion into the anterior chamber of the eye. Essential for bone resorption and osteoclast differentiation. Contributes to intracellular pH regulation in the duodenal upper villous epithelium during proton-coupled peptide absorption. Stimulates the chloride-bicarbonate exchange activity of SLC26A6. The chain is Carbonic anhydrase 2 (CA2) from Ovis aries (Sheep).